A 187-amino-acid polypeptide reads, in one-letter code: Shikimate kinase (187 aa).

Residue 18 to 23 (GCGKST) participates in ATP binding. Serine 22 provides a ligand contact to Mg(2+). Residues aspartate 40, arginine 64, and glycine 86 each contribute to the substrate site. Arginine 128 provides a ligand contact to ATP. Arginine 147 lines the substrate pocket. Arginine 164 lines the ATP pocket.

It belongs to the shikimate kinase family. Monomer. The cofactor is Mg(2+).

It is found in the cytoplasm. The catalysed reaction is shikimate + ATP = 3-phosphoshikimate + ADP + H(+). Its pathway is metabolic intermediate biosynthesis; chorismate biosynthesis; chorismate from D-erythrose 4-phosphate and phosphoenolpyruvate: step 5/7. Its function is as follows. Catalyzes the specific phosphorylation of the 3-hydroxyl group of shikimic acid using ATP as a cosubstrate. This chain is Shikimate kinase, found in Rhodopirellula baltica (strain DSM 10527 / NCIMB 13988 / SH1).